The chain runs to 667 residues: Cyclin-dependent kinase 17 (667 aa).

Disordered regions lie at residues 1 to 70 and 85 to 184; these read MTAY…SSLN and DSEY…LRKM. Acidic residues-rich tracts occupy residues 99 to 111 and 119 to 144; these read EDFDEEEEDEFED and DEDDVEYEDEDDEDDIVVEEEEITPE. Over residues 151–164 the composition is skewed to polar residues; sequence TGVTTQTTPPSNNT. Residues 328–609 form the Protein kinase domain; the sequence is YEKLDKLGEG…AAEAVKHPFL (282 aa). ATP is bound by residues 334–342 and Lys-357; that span reads LGEGTYATV. Residue Asp-449 is the Proton acceptor of the active site. Residues Asn-454 and Asp-467 each contribute to the Mg(2+) site. Positions 642–667 are disordered; it reads HHHSSRRHHRGTLVKDKYRMHSSHHT. Over residues 644–653 the composition is skewed to basic residues; that stretch reads HSSRRHHRGT.

It belongs to the protein kinase superfamily. CMGC Ser/Thr protein kinase family. CDC2/CDKX subfamily. In terms of assembly, interacts with cyy-1; the interaction is required to activate pct-1. It depends on Mg(2+) as a cofactor.

It is found in the cytoplasm. It localises to the cell projection. The protein resides in the dendrite. Its subcellular location is the axon. The catalysed reaction is L-seryl-[protein] + ATP = O-phospho-L-seryl-[protein] + ADP + H(+). It catalyses the reaction L-threonyl-[protein] + ATP = O-phospho-L-threonyl-[protein] + ADP + H(+). Functionally, serine/threonine-protein kinase, which, in association with cyy-1, regulates the trafficking of synaptic vesicles in the DA9 motor neuron and probably also in the DD motor neurons and in RIA interneurons. Its function is as follows. Sufficient for synaptic vesicle trafficking in the DA9 motor neuron. In Caenorhabditis elegans, this protein is Cyclin-dependent kinase 17.